The following is a 596-amino-acid chain: Probable lysosomal cobalamin transporter (596 aa).

10 helical membrane-spanning segments follow: residues 7 to 27, 46 to 66, 95 to 115, 145 to 165, 196 to 216, 313 to 333, 350 to 370, 376 to 396, 420 to 440, and 507 to 527; these read AFIWVAYAVAVGIVALIAAIF, IITLTSLLATVLLLPVDIALV, IVYYALYSLDAVLCLLVIPFT, TLFFVVLVVILFLVGFFAPVA, LLISLGTLLYILYTSVGLALL, LVGGILLLLLSVIIWASMLIT, ILGSINIFQPLNWVFVKSSIV, VLMALLVLFLFSSSVTGIAVI, MATVMLTLIILAINYSIAMII, and FFGALAFWAQFVFLAIFLIVF. Positions 566 to 596 are disordered; it reads WQDIRGKAKNQTPSRGAAGRGIRGDDDHDDD. Residues 587–596 show a composition bias toward basic and acidic residues; the sequence is IRGDDDHDDD.

This sequence belongs to the LIMR family. LMBRD1 subfamily.

The protein localises to the lysosome membrane. Its function is as follows. Probable lysosomal cobalamin transporter. Required to export cobalamin from lysosomes allowing its conversion to cofactors. The protein is Probable lysosomal cobalamin transporter of Sclerotinia sclerotiorum (strain ATCC 18683 / 1980 / Ss-1) (White mold).